A 319-amino-acid polypeptide reads, in one-letter code: Protein MGF 360-8L (319 aa).

It belongs to the asfivirus MGF 360 family.

Its function is as follows. Plays a role in virus cell tropism, and may be required for efficient virus replication in macrophages. In Ornithodoros (relapsing fever ticks), this protein is Protein MGF 360-8L.